The sequence spans 161 residues: Peroxynitrite isomerase 2 (161 aa).

A GXWXGXG motif is present at residues 17–23 (GTWAGQG). Heme b is bound at residue His-152.

It belongs to the nitrobindin family. Homodimer. It depends on heme b as a cofactor.

It carries out the reaction peroxynitrite = nitrate. It participates in nitrogen metabolism. Heme-binding protein able to scavenge peroxynitrite and to protect free L-tyrosine against peroxynitrite-mediated nitration, by acting as a peroxynitrite isomerase that converts peroxynitrite to nitrate. Therefore, this protein likely plays a role in peroxynitrite sensing and in the detoxification of reactive nitrogen and oxygen species (RNS and ROS, respectively). Is able to bind nitric oxide (NO) in vitro, but may act as a sensor of peroxynitrite levels in vivo. This chain is Peroxynitrite isomerase 2, found in Mycobacterium ulcerans (strain Agy99).